The sequence spans 142 residues: Large ribosomal subunit protein uL13 (142 aa).

The protein belongs to the universal ribosomal protein uL13 family. In terms of assembly, part of the 50S ribosomal subunit.

Functionally, this protein is one of the early assembly proteins of the 50S ribosomal subunit, although it is not seen to bind rRNA by itself. It is important during the early stages of 50S assembly. This Laribacter hongkongensis (strain HLHK9) protein is Large ribosomal subunit protein uL13.